The primary structure comprises 156 residues: Small ribosomal subunit protein uS7 (156 aa).

The protein belongs to the universal ribosomal protein uS7 family. Part of the 30S ribosomal subunit. Contacts proteins S9 and S11.

In terms of biological role, one of the primary rRNA binding proteins, it binds directly to 16S rRNA where it nucleates assembly of the head domain of the 30S subunit. Is located at the subunit interface close to the decoding center, probably blocks exit of the E-site tRNA. The polypeptide is Small ribosomal subunit protein uS7 (Desulforamulus reducens (strain ATCC BAA-1160 / DSM 100696 / MI-1) (Desulfotomaculum reducens)).